We begin with the raw amino-acid sequence, 87 residues long: Putative regulatory protein CHY_1489 (87 aa).

This sequence belongs to the RemA family.

The chain is Putative regulatory protein CHY_1489 from Carboxydothermus hydrogenoformans (strain ATCC BAA-161 / DSM 6008 / Z-2901).